Here is a 357-residue protein sequence, read N- to C-terminus: DNA replication and repair protein RecF (357 aa).

An ATP-binding site is contributed by 30 to 37; sequence GANGSGKT.

This sequence belongs to the RecF family.

It localises to the cytoplasm. The RecF protein is involved in DNA metabolism; it is required for DNA replication and normal SOS inducibility. RecF binds preferentially to single-stranded, linear DNA. It also seems to bind ATP. The polypeptide is DNA replication and repair protein RecF (Shigella dysenteriae serotype 1 (strain Sd197)).